A 348-amino-acid chain; its full sequence is Protein DMR6-LIKE OXYGENASE 2 (348 aa).

Positions 194–294 (KHGQHMAINY…RISIPTFYCP (101 aa)) constitute a Fe2OG dioxygenase domain. Positions 219, 221, and 275 each coordinate Fe cation. Residue R285 coordinates 2-oxoglutarate.

The protein belongs to the iron/ascorbate-dependent oxidoreductase family. Requires Fe(2+) as cofactor.

The enzyme catalyses salicylate + NADH + O2 + H(+) = 2,3-dihydroxybenzoate + NAD(+) + H2O. Converts salicylic acid (SA) to 2,3-dihydroxybenzoic acid (2,3-DHBA). Negative regulator of defense against Hyaloperonospora arabidopsidis. In terms of biological role, (Microbial infection) Confers susceptibility to the downy mildew pathogen Hyaloperonospora arabidopsidis. In Arabidopsis thaliana (Mouse-ear cress), this protein is Protein DMR6-LIKE OXYGENASE 2.